Here is a 323-residue protein sequence, read N- to C-terminus: Methionyl-tRNA formyltransferase (323 aa).

Position 117–120 (117–120 (SLLP)) interacts with (6S)-5,6,7,8-tetrahydrofolate.

Belongs to the Fmt family.

The enzyme catalyses L-methionyl-tRNA(fMet) + (6R)-10-formyltetrahydrofolate = N-formyl-L-methionyl-tRNA(fMet) + (6S)-5,6,7,8-tetrahydrofolate + H(+). Its function is as follows. Attaches a formyl group to the free amino group of methionyl-tRNA(fMet). The formyl group appears to play a dual role in the initiator identity of N-formylmethionyl-tRNA by promoting its recognition by IF2 and preventing the misappropriation of this tRNA by the elongation apparatus. The protein is Methionyl-tRNA formyltransferase of Albidiferax ferrireducens (strain ATCC BAA-621 / DSM 15236 / T118) (Rhodoferax ferrireducens).